A 374-amino-acid polypeptide reads, in one-letter code: Alanine racemase (374 aa).

Lys-44 acts as the Proton acceptor; specific for D-alanine in catalysis. N6-(pyridoxal phosphate)lysine is present on Lys-44. Arg-139 lines the substrate pocket. The active-site Proton acceptor; specific for L-alanine is the Tyr-269. Met-317 contributes to the substrate binding site.

This sequence belongs to the alanine racemase family. It depends on pyridoxal 5'-phosphate as a cofactor.

It catalyses the reaction L-alanine = D-alanine. The protein operates within amino-acid biosynthesis; D-alanine biosynthesis; D-alanine from L-alanine: step 1/1. In terms of biological role, catalyzes the interconversion of L-alanine and D-alanine. May also act on other amino acids. The polypeptide is Alanine racemase (alr) (Bordetella avium (strain 197N)).